A 313-amino-acid chain; its full sequence is WD repeat-containing protein 82-A (313 aa).

WD repeat units follow at residues 19–58 (ENSD…PKRT), 105–144 (GHSK…CQGL), 146–184 (HLQG…KGPF), 192–231 (DRTC…VMHT), 236–276 (NNSK…KVAV), and 280–313 (KHTG…TIDD).

It belongs to the WD repeat SWD2 family. Component of the SET1/COMPASS complex. Component of the PNUTS-PP1 phosphatase complex.

Its subcellular location is the nucleus. The protein localises to the chromosome. The protein resides in the cytoplasm. In terms of biological role, regulatory component of the SET1/COMPASS complex implicated in the tethering of this complex to transcriptional start sites of active genes. Facilitates histone H3 'Lys-4' methylation (H3K4me) via recruitment of the SETD1A or SETD1B to the 'Ser-5' phosphorylated C-terminal domain (CTD) of RNA polymerase II large subunit (POLR2A). Component of the PNUTS-PP1 protein phosphatase complex, a protein phosphatase 1 (PP1) complex that promotes RNA polymerase II transcription pause-release, allowing transcription elongation. This is WD repeat-containing protein 82-A (wdr82-a) from Xenopus laevis (African clawed frog).